A 194-amino-acid polypeptide reads, in one-letter code: Mpv17-like protein (194 aa).

Topologically, residues 1-14 (MASWWRAFPQAARR) are cytoplasmic. The helical transmembrane segment at 15–34 (YPWPTNVLLYAGLFSAGDAL) threads the bilayer. The targeting to peroxisomes stretch occupies residues 16 to 55 (PWPTNVLLYAGLFSAGDALQQRLRGGPADWRQTRRVATLA). At 35-50 (QQRLRGGPADWRQTRR) the chain is on the lumenal side. Residues 51–67 (VATLAVTFHGNFNYVWL) traverse the membrane as a helical segment. The Cytoplasmic segment spans residues 68 to 91 (RLLERALPGRAPRTVLAKVLCDQT). Residues 92-110 (VGGPIALSAFYVGMSVLQG) traverse the membrane as a helical segment. Topologically, residues 111-150 (KDDIFLDLKQKFWNTYKSGLMYWPFVQLTNFSLVPVHWRT) are lumenal. Residues 151–168 (AYTGLCAFLWATFLCFSQ) form a helical membrane-spanning segment. Residues 169–194 (QSGDGTLQSIFIFLRRKEASDKSPEK) are Cytoplasmic-facing.

This sequence belongs to the peroxisomal membrane protein PXMP2/4 family. As to expression, isoform 1 and isoform 3 are expressed in the kidney (at protein level). Isoform 1 is expressed in the kidney, spleen, heart, brain, lung and liver. Isoform 3 is expressed in the kidney. Isoform 1 and isoform 3 expression increase during development, reache their highest level in adulthood and decrease with aging.

It is found in the peroxisome membrane. It localises to the cytoplasm. Participates in reactive oxygen species metabolism by up- or down-regulation of the genes of antioxidant enzymes. Protective against the mitochondrial apoptotic cascade. Its function is as follows. Participates in reactive oxygen species metabolism by up- or down-regulation of the genes of antioxidant enzymes. The polypeptide is Mpv17-like protein (Mpv17l) (Mus musculus (Mouse)).